The following is a 111-amino-acid chain: MRGAYYVAIAFLVAASSRTAAEFDQAEPQPAINNDILTSGGTVNEMLPKRVLRGSRDLKDKLAVYANDEQRTFDLFPNENNFSKALNPTITKTANVMRADRDDVMAKAAEQ.

Residues 1-21 (MRGAYYVAIAFLVAASSRTAA) form the signal peptide. The RxLR-dEER signature appears at 50 to 71 (RVLRGSRDLKDKLAVYANDEQR). N-linked (GlcNAc...) asparagine glycosylation occurs at Asn81.

It belongs to the RxLR effector family.

It is found in the secreted. It localises to the host nucleus. Its subcellular location is the host cytoplasm. In terms of biological role, secreted effector that completely suppresses the host cell death induced by cell death-inducing proteins. This Plasmopara viticola (Downy mildew of grapevine) protein is Secreted RxLR effector protein 159.